We begin with the raw amino-acid sequence, 189 residues long: Movement protein p22 (189 aa).

This sequence belongs to the tombusvirus/aureusvirus movement protein p22 family. In terms of assembly, interacts with host protein HFI22. Post-translationally, phosphorylated.

It localises to the host membrane. Its function is as follows. Cell-to-cell movement. Displays RNA-binding activity. In Capsicum annuum (Capsicum pepper), this protein is Movement protein p22.